The following is a 583-amino-acid chain: Threonine--tRNA ligase (583 aa).

Residues 185-478 (DHRKLGRELN…LVEHYGGAFP (294 aa)) are catalytic. The Zn(2+) site is built by cysteine 278, histidine 329, and histidine 455.

It belongs to the class-II aminoacyl-tRNA synthetase family. Homodimer. The cofactor is Zn(2+).

The protein resides in the cytoplasm. It catalyses the reaction tRNA(Thr) + L-threonine + ATP = L-threonyl-tRNA(Thr) + AMP + diphosphate + H(+). Catalyzes the attachment of threonine to tRNA(Thr) in a two-step reaction: L-threonine is first activated by ATP to form Thr-AMP and then transferred to the acceptor end of tRNA(Thr). Also edits incorrectly charged L-seryl-tRNA(Thr). This chain is Threonine--tRNA ligase, found in Borrelia duttonii (strain Ly).